A 259-amino-acid chain; its full sequence is Phosphatidylinositol transfer protein 2 (259 aa).

A coiled-coil region spans residues 231–259 (LTIEDIRKIEEETKAELAKKLEENKAANK).

It belongs to the PtdIns transfer protein family. PI transfer class IIA subfamily.

It is found in the cytoplasm. The protein localises to the golgi apparatus. In terms of biological role, catalyzes the transfer of PtdIns and phosphatidylcholine between membranes. This is Phosphatidylinositol transfer protein 2 (pitB) from Dictyostelium discoideum (Social amoeba).